The primary structure comprises 267 residues: Indole-3-glycerol phosphate synthase (267 aa).

The protein belongs to the TrpC family.

The catalysed reaction is 1-(2-carboxyphenylamino)-1-deoxy-D-ribulose 5-phosphate + H(+) = (1S,2R)-1-C-(indol-3-yl)glycerol 3-phosphate + CO2 + H2O. The protein operates within amino-acid biosynthesis; L-tryptophan biosynthesis; L-tryptophan from chorismate: step 4/5. This chain is Indole-3-glycerol phosphate synthase, found in Dichelobacter nodosus (strain VCS1703A).